Consider the following 1134-residue polypeptide: RNA-binding protein NAB6 (1134 aa).

N-acetylserine is present on Ser2. 3 disordered regions span residues Arg112–Asn133, Arg151–Ser173, and Ser464–Thr491. 2 stretches are compositionally biased toward low complexity: residues Ser115 to Asn133 and Arg151 to Asn164. Ser464 and Ser467 each carry phosphoserine. A compositionally biased stretch (low complexity) spans Gly471 to Gly489. Residues Arg653–Tyr726 enclose the RRM domain. 2 disordered regions span residues Leu918–Leu959 and Asn1043–Ala1092. Polar residues predominate over residues Ser1057 to Ala1081. Residues Asn1083–Ala1092 are compositionally biased toward basic residues.

It localises to the cytoplasm. RNA-binding protein that associates with mRNAs encoding cell wall proteins. In Saccharomyces cerevisiae (strain ATCC 204508 / S288c) (Baker's yeast), this protein is RNA-binding protein NAB6 (NAB6).